Reading from the N-terminus, the 249-residue chain is Microvitellogenin (249 aa).

The N-terminal stretch at 1–17 (MLRTTVVLLTLAAIAFA) is a signal peptide.

Functionally, small vitellogenic protein found in females. It is synthesized in the fat body, secreted into the hemolymph, and taken up by developing oocytes. The protein is Microvitellogenin (MVG) of Manduca sexta (Tobacco hawkmoth).